Reading from the N-terminus, the 452-residue chain is Enolase (452 aa).

Q167 provides a ligand contact to (2R)-2-phosphoglycerate. The Proton donor role is filled by E209. Positions 250, 310, and 337 each coordinate Mg(2+). Residues K362, R391, S392, and K413 each contribute to the (2R)-2-phosphoglycerate site. Catalysis depends on K362, which acts as the Proton acceptor.

Belongs to the enolase family. Requires Mg(2+) as cofactor.

It is found in the cytoplasm. It localises to the secreted. Its subcellular location is the cell surface. The enzyme catalyses (2R)-2-phosphoglycerate = phosphoenolpyruvate + H2O. Its pathway is carbohydrate degradation; glycolysis; pyruvate from D-glyceraldehyde 3-phosphate: step 4/5. Its function is as follows. Catalyzes the reversible conversion of 2-phosphoglycerate (2-PG) into phosphoenolpyruvate (PEP). It is essential for the degradation of carbohydrates via glycolysis. This is Enolase from Mycoplasmopsis synoviae (strain 53) (Mycoplasma synoviae).